The sequence spans 113 residues: uncharacterized protein (113 aa).

The protein belongs to the HesB/IscA family.

This is an uncharacterized protein from Synechocystis sp. (strain ATCC 27184 / PCC 6803 / Kazusa).